A 234-amino-acid chain; its full sequence is Probable septum site-determining protein MinC (234 aa).

The protein belongs to the MinC family. Interacts with MinD and FtsZ.

Its function is as follows. Cell division inhibitor that blocks the formation of polar Z ring septums. Rapidly oscillates between the poles of the cell to destabilize FtsZ filaments that have formed before they mature into polar Z rings. Prevents FtsZ polymerization. The chain is Probable septum site-determining protein MinC from Pseudoalteromonas translucida (strain TAC 125).